Here is a 577-residue protein sequence, read N- to C-terminus: Pentatricopeptide repeat-containing protein At1g63400 (577 aa).

15 PPR repeats span residues 49-83 (GSGDYREILRNGLHSMKLDDAIGLFGGMVKSRPLP), 84-118 (SIFEFNKLLSAIAKMKKFDLVISLGEKMQRLGISH), 119-153 (NLYTYNILINCFCRRSQISLALALLGKMMKLGYEP), 154-188 (SIVTLSSLLNGYCHGKRISDAVALVDQMVEMGYRP), 189-223 (DTITFTTLIHGLFLHNKASEAVALVDRMVQRGCQP), 224-258 (NLVTYGVVVNGLCKRGDIDLAFNLLNKMEAAKIEA), 259-293 (NVVIYSTVIDSLCKYRHEDDALNLFTEMENKGVRP), 294-328 (NVITYSSLISCLCNYERWSDASRLLSDMIERKINP), 329-363 (NVVTFNALIDAFVKEGKLVEAEKLYDEMIKRSIDP), 364-398 (DIFTYSSLINGFCMHDRLDEAKHMFELMISKDCFP), 399-433 (NVVTYNTLINGFCKAKRIDEGVELFREMSQRGLVG), 434-468 (NTVTYTTLIHGFFQARDCDNAQMVFKQMVSDGVHP), 469-503 (NIMTYNTLLDGLCKNGKLEKAMVVFEYLQRSKMEP), 504-538 (TIYTYNIMIEGMCKAGKVEDGWDLFCSLSLKGVKP), and 539-573 (DVIIYNTMISGFCRKGLKEEADALFRKMREDGPLP).

This sequence belongs to the PPR family. P subfamily.

The protein is Pentatricopeptide repeat-containing protein At1g63400 of Arabidopsis thaliana (Mouse-ear cress).